The sequence spans 507 residues: Cobyric acid synthase (507 aa).

One can recognise a GATase cobBQ-type domain in the interval 259–456; the sequence is EIQIAVIKLP…LHGIFDNGTW (198 aa). The Nucleophile role is filled by cysteine 340. Residue histidine 448 is part of the active site.

The protein belongs to the CobB/CobQ family. CobQ subfamily.

It participates in cofactor biosynthesis; adenosylcobalamin biosynthesis. Functionally, catalyzes amidations at positions B, D, E, and G on adenosylcobyrinic A,C-diamide. NH(2) groups are provided by glutamine, and one molecule of ATP is hydrogenolyzed for each amidation. The polypeptide is Cobyric acid synthase (Prochlorococcus marinus (strain SARG / CCMP1375 / SS120)).